A 221-amino-acid chain; its full sequence is Alpha-ketoglutarate-dependent dioxygenase alkB homolog 7, mitochondrial (221 aa).

The transit peptide at 1 to 23 directs the protein to the mitochondrion; sequence MAGSRRLAMRLLSGCAWVRGSDS. 2 residues coordinate Fe cation: H121 and D123. 2-oxoglutarate is bound at residue Y165. H177 serves as a coordination point for Fe cation. Residues 197–199 and R203 each bind 2-oxoglutarate; that span reads RIS.

The protein belongs to the alkB family. The cofactor is Fe(2+). In terms of tissue distribution, widely expressed.

Its subcellular location is the mitochondrion matrix. Its function is as follows. May function as protein hydroxylase; can catalyze auto-hydroxylation at Leu-110 (in vitro), but this activity may be due to the absence of the true substrate. Required to induce programmed necrosis in response to DNA damage caused by cytotoxic alkylating agents. Acts by triggering the collapse of mitochondrial membrane potential and loss of mitochondrial function that leads to energy depletion and cell death. ALKBH7-mediated necrosis is probably required to prevent the accumulation of cells with DNA damage. Does not display DNA demethylase activity. Involved in fatty acid metabolism. The protein is Alpha-ketoglutarate-dependent dioxygenase alkB homolog 7, mitochondrial (Alkbh7) of Mus musculus (Mouse).